We begin with the raw amino-acid sequence, 351 residues long: tRNA-specific 2-thiouridylase MnmA (351 aa).

Residues 7 to 14 (GLSGGVDS) and Leu33 each bind ATP. Residue Cys94 is the Nucleophile of the active site. Residues Cys94 and Cys193 are joined by a disulfide bond. Gly119 lines the ATP pocket. The tract at residues 143–145 (KDQ) is interaction with tRNA. Cys193 acts as the Cysteine persulfide intermediate in catalysis. The interval 298-299 (RY) is interaction with tRNA.

This sequence belongs to the MnmA/TRMU family.

The protein localises to the cytoplasm. The enzyme catalyses S-sulfanyl-L-cysteinyl-[protein] + uridine(34) in tRNA + AH2 + ATP = 2-thiouridine(34) in tRNA + L-cysteinyl-[protein] + A + AMP + diphosphate + H(+). In terms of biological role, catalyzes the 2-thiolation of uridine at the wobble position (U34) of tRNA, leading to the formation of s(2)U34. This chain is tRNA-specific 2-thiouridylase MnmA, found in Nostoc punctiforme (strain ATCC 29133 / PCC 73102).